We begin with the raw amino-acid sequence, 265 residues long: Cytochrome b-c1 complex subunit Rieske, mitochondrial (265 aa).

The transit peptide at 1 to 53 (MLRVAGRRLSSSAARSSSTFFTRSSFTVTDDSSPARSPSPSLTSSFLDQIRGF) directs the protein to the mitochondrion. Over 54 to 102 (SSNSVSPAHQLGLVSDLPATVAAIKNPSSKIVYDDSNHERYPPGDPSKR) the chain is Mitochondrial matrix. A helical transmembrane segment spans residues 103–125 (AFAYFVLTGGRFVYASSVRLLIL). At 126 to 265 (KFVLSMSASK…FLEENKLLIG (140 aa)) the chain is on the mitochondrial intermembrane side. A Rieske domain is found at 175–263 (IKLANSVDLG…YSFLEENKLL (89 aa)). [2Fe-2S] cluster is bound by residues C208, H210, C227, and H230. C213 and C229 are joined by a disulfide.

It belongs to the Rieske iron-sulfur protein family. As to quaternary structure, component of the ubiquinol-cytochrome c oxidoreductase (cytochrome b-c1 complex, complex III, CIII), a multisubunit enzyme composed of 3 respiratory subunits cytochrome b, cytochrome c1 and Rieske protein, 2 core protein subunits, and several low-molecular weight protein subunits. The complex exists as an obligatory dimer and forms supercomplexes (SCs) in the inner mitochondrial membrane with cytochrome c oxidase (complex IV, CIV). It depends on [2Fe-2S] cluster as a cofactor.

Its subcellular location is the mitochondrion inner membrane. The enzyme catalyses a quinol + 2 Fe(III)-[cytochrome c](out) = a quinone + 2 Fe(II)-[cytochrome c](out) + 2 H(+)(out). Component of the ubiquinol-cytochrome c oxidoreductase, a multisubunit transmembrane complex that is part of the mitochondrial electron transport chain which drives oxidative phosphorylation. The respiratory chain contains 3 multisubunit complexes succinate dehydrogenase (complex II, CII), ubiquinol-cytochrome c oxidoreductase (cytochrome b-c1 complex, complex III, CIII) and cytochrome c oxidase (complex IV, CIV), that cooperate to transfer electrons derived from NADH and succinate to molecular oxygen, creating an electrochemical gradient over the inner membrane that drives transmembrane transport and the ATP synthase. The cytochrome b-c1 complex catalyzes electron transfer from ubiquinol to cytochrome c, linking this redox reaction to translocation of protons across the mitochondrial inner membrane, with protons being carried across the membrane as hydrogens on the quinol. In the process called Q cycle, 2 protons are consumed from the matrix, 4 protons are released into the intermembrane space and 2 electrons are passed to cytochrome c. The Rieske protein is a catalytic core subunit containing a [2Fe-2S] iron-sulfur cluster. It cycles between 2 conformational states during catalysis to transfer electrons from the quinol bound in the Q(0) site in cytochrome b to cytochrome c1. The sequence is that of Cytochrome b-c1 complex subunit Rieske, mitochondrial (FES1) from Solanum tuberosum (Potato).